The sequence spans 267 residues: MTVWQAIVLGIVQGLTEPLPVSSSAHLALTPYFLGWSDPGLAFDVALHFGTLLALIWYFRREWLEMIASAWRIARTRRVETVHDRRVLYLIAATIPGGIGGLLLNDLAETTFRSPVVIATSLIVMGILLWAVDRWSARARVLEEVTLRDAIIVGCAQVLALVPGVSRSGSTMTAGRLLKLDRPSVARFSFLMSMPITLAAVIVKMPDAVREHGASLPLLAGVAAAAVSSWFAISVLLRYVARHSFGVFAVYRVLLGIVVFATLASRT.

The next 7 helical transmembrane spans lie at proline 39–phenylalanine 59, valine 87–leucine 107, phenylalanine 112–valine 132, valine 145–valine 165, proline 183–valine 203, leucine 216–leucine 236, and serine 244–alanine 264.

The protein belongs to the UppP family.

It localises to the cell inner membrane. It catalyses the reaction di-trans,octa-cis-undecaprenyl diphosphate + H2O = di-trans,octa-cis-undecaprenyl phosphate + phosphate + H(+). Catalyzes the dephosphorylation of undecaprenyl diphosphate (UPP). Confers resistance to bacitracin. This is Undecaprenyl-diphosphatase from Gemmatimonas aurantiaca (strain DSM 14586 / JCM 11422 / NBRC 100505 / T-27).